Reading from the N-terminus, the 412-residue chain is F-box/WD repeat-containing protein 4 (412 aa).

One can recognise an F-box domain in the interval 25–71 (GPALWRLPEELLLLICSYLDMRALGRLAQVCRWLRRFTSCDLLWRRI). 6 WD repeats span residues 154–190 (RPLG…IHKI), 193–229 (TFTV…VWPL), 236–277 (QCLH…IWDL), 283–321 (MTHL…YWDL), 327–366 (KCVM…LWDR), and 373–409 (HAFP…VLDF).

Part of a SCF (SKP1-cullin-F-box) protein ligase complex. Interacts with POUF51. In terms of tissue distribution, expressed in brain, kidney, lung and liver.

Probably recognizes and binds to some phosphorylated proteins and promotes their ubiquitination and degradation. Likely to be involved in key signaling pathways crucial for normal limb development. May participate in Wnt signaling. This chain is F-box/WD repeat-containing protein 4 (FBXW4), found in Homo sapiens (Human).